The chain runs to 808 residues: MFFVSAVKDYLEVLSNITDTLTGTLSFDTILKSTLLYLATSTKVFVSYIISFEWFRNISYLPIIAPDLSKAILRENYVLDTPLSNLFTFFDVPSYTSNKFVLGLLNSFFLAIPISVAHLIAFRRFIIQGLPAGLTAGLGIISGQVCFIGAVLFGVRSLVIPWFATEPLSYLIGIFLILTIIYDMAHESRIRPINLSETPLLLKIFGLSFLLTWTEQSSVFQYLANVTLGNQATLLETTTVKTDGQFLLTHISYLLGLTAGNILFTLLFGFLLLQLINQVVKFSNLPYSLCVRNLNFGILTFTLALSITSIPYYGFDYLLTAPLGFVSQDQSLEKVSLRTNLPDAIGYLGQLSESKYLDTEVTPFDRGTYLTDFATPKTYESLNYQGEYFWNSRLDRSASVTQKYRALEFNPKKDSESEIPEQVGALSPDSQANSVSPGQELSENELGLGTTKTNKQVLLNKLDQNFSRNSNPSYANLLSEVLDYSFNESFFTTSASNAPQEVALQKIEFNIKQKYYSNPLYKALLNFDIDRFISHQPVAQRLNANQEKQLFENRLILSTYYDTLRDYRLLPYSSEFQTYFNGPKSYANRVYNQQFKGTLNVVRRLFAIDIEGDSAGRSTSNSVLKFDQPLFNNFKDSSLSVYHEELNPEAVRPTKKSPFLENTSPTPFYAGWDNIQRKFIVTNRLLAREAAGNEINRASRNISSATSALTAKDYTSLGDTVKLKFTSWPDSSSKGGNSKGVNQLSLPFISVPQEKFTQVVSSLGLEDDDFGSASSTLKLPPNIKKMFEVCQISIPEVFPPKRGGFIWP.

Helical transmembrane passes span 35-55, 100-120, 135-155, 158-178, 193-213, 253-273, and 295-315; these read LLYL…FEWF, FVLG…AHLI, TAGL…LFGV, LVIP…FLIL, INLS…LLTW, YLLG…FLLL, and NFGI…YYGF. A disordered region spans residues 411 to 447; that stretch reads PKKDSESEIPEQVGALSPDSQANSVSPGQELSENELG. Over residues 428 to 441 the composition is skewed to polar residues; the sequence is PDSQANSVSPGQEL.

Belongs to the ycf78 family.

Its subcellular location is the plastid. The protein resides in the chloroplast membrane. This is an uncharacterized protein from Oltmannsiellopsis viridis (Marine flagellate).